Reading from the N-terminus, the 231-residue chain is Large ribosomal subunit protein uL1 (231 aa).

It belongs to the universal ribosomal protein uL1 family. In terms of assembly, part of the 50S ribosomal subunit.

In terms of biological role, binds directly to 23S rRNA. The L1 stalk is quite mobile in the ribosome, and is involved in E site tRNA release. Protein L1 is also a translational repressor protein, it controls the translation of the L11 operon by binding to its mRNA. The polypeptide is Large ribosomal subunit protein uL1 (Gluconacetobacter diazotrophicus (strain ATCC 49037 / DSM 5601 / CCUG 37298 / CIP 103539 / LMG 7603 / PAl5)).